Reading from the N-terminus, the 150-residue chain is Large ribosomal subunit protein bL9 (150 aa).

Belongs to the bacterial ribosomal protein bL9 family.

Functionally, binds to the 23S rRNA. This chain is Large ribosomal subunit protein bL9, found in Halorhodospira halophila (strain DSM 244 / SL1) (Ectothiorhodospira halophila (strain DSM 244 / SL1)).